Here is a 1066-residue protein sequence, read N- to C-terminus: Isoleucine--tRNA ligase (1066 aa).

Residues 47–57 (PYTTGYIHLGT) carry the 'HIGH' region motif. The 'KMSKS' region motif lies at 594–598 (KMSKS). ATP is bound at residue Lys-597.

The protein belongs to the class-I aminoacyl-tRNA synthetase family. IleS type 2 subfamily. Monomer. Zn(2+) serves as cofactor.

Its subcellular location is the cytoplasm. The enzyme catalyses tRNA(Ile) + L-isoleucine + ATP = L-isoleucyl-tRNA(Ile) + AMP + diphosphate. In terms of biological role, catalyzes the attachment of isoleucine to tRNA(Ile). As IleRS can inadvertently accommodate and process structurally similar amino acids such as valine, to avoid such errors it has two additional distinct tRNA(Ile)-dependent editing activities. One activity is designated as 'pretransfer' editing and involves the hydrolysis of activated Val-AMP. The other activity is designated 'posttransfer' editing and involves deacylation of mischarged Val-tRNA(Ile). This Methanocorpusculum labreanum (strain ATCC 43576 / DSM 4855 / Z) protein is Isoleucine--tRNA ligase.